We begin with the raw amino-acid sequence, 440 residues long: ATP-dependent RNA helicase sub2 (440 aa).

The span at Met-1–Gln-16 shows a compositional bias: acidic residues. The disordered stretch occupies residues Met-1–Gly-42. A compositionally biased stretch (low complexity) spans Thr-17 to Ala-28. A Q motif motif is present at residues Thr-57 to Gln-85. The Helicase ATP-binding domain occupies Ile-88 to Val-263. Position 101-108 (Ala-101–Thr-108) interacts with ATP. The short motif at Asp-210–Asp-213 is the DEAD box element. The 146-residue stretch at Lys-291–Ser-436 folds into the Helicase C-terminal domain.

The protein belongs to the DEAD box helicase family. DECD subfamily.

The protein resides in the nucleus. It carries out the reaction ATP + H2O = ADP + phosphate + H(+). In terms of biological role, ATP-binding RNA helicase involved in transcription elongation and required for the export of mRNA out of the nucleus. SUB2 also plays a role in pre-mRNA splicing and spliceosome assembly. May be involved in rDNA and telomeric silencing, and maintenance of genome integrity. This is ATP-dependent RNA helicase sub2 (sub2) from Aspergillus niger (strain ATCC MYA-4892 / CBS 513.88 / FGSC A1513).